A 452-amino-acid polypeptide reads, in one-letter code: Exoglucanase 1 (452 aa).

Positions 1–18 (MFSKFALTGSLLAGAVNA) are cleaved as a signal peptide. Asparagine 75 is a glycosylation site (N-linked (GlcNAc...) asparagine). The active-site Nucleophile is glutamate 230. The Proton donor role is filled by glutamate 235. 2 N-linked (GlcNAc...) asparagine glycosylation sites follow: asparagine 335 and asparagine 360.

The protein belongs to the glycosyl hydrolase 7 (cellulase C) family.

It carries out the reaction Hydrolysis of (1-&gt;4)-beta-D-glucosidic linkages in cellulose and cellotetraose, releasing cellobiose from the non-reducing ends of the chains.. Its function is as follows. The biological conversion of cellulose to glucose generally requires three types of hydrolytic enzymes: (1) Endoglucanases which cut internal beta-1,4-glucosidic bonds; (2) Exocellobiohydrolases that cut the disaccharide cellobiose from the non-reducing end of the cellulose polymer chain; (3) Beta-1,4-glucosidases which hydrolyze the cellobiose and other short cello-oligosaccharides to glucose. This is Exoglucanase 1 (CBH-1) from Cryphonectria parasitica (Chestnut blight fungus).